A 176-amino-acid polypeptide reads, in one-letter code: NAD(P)H-quinone oxidoreductase subunit 6, chloroplastic (176 aa).

A run of 5 helical transmembrane segments spans residues 10–30 (ILML…VLLT), 33–53 (IYSA…YFLL), 60–80 (VAQL…AVMF), 95–115 (IGDG…MTTI), and 152–172 (FYLP…GAIT).

Belongs to the complex I subunit 6 family. NDH is composed of at least 16 different subunits, 5 of which are encoded in the nucleus.

It is found in the plastid. It localises to the chloroplast thylakoid membrane. The catalysed reaction is a plastoquinone + NADH + (n+1) H(+)(in) = a plastoquinol + NAD(+) + n H(+)(out). It carries out the reaction a plastoquinone + NADPH + (n+1) H(+)(in) = a plastoquinol + NADP(+) + n H(+)(out). NDH shuttles electrons from NAD(P)H:plastoquinone, via FMN and iron-sulfur (Fe-S) centers, to quinones in the photosynthetic chain and possibly in a chloroplast respiratory chain. The immediate electron acceptor for the enzyme in this species is believed to be plastoquinone. Couples the redox reaction to proton translocation, and thus conserves the redox energy in a proton gradient. In Lolium perenne (Perennial ryegrass), this protein is NAD(P)H-quinone oxidoreductase subunit 6, chloroplastic (ndhG).